Consider the following 166-residue polypeptide: Coiled-coil domain-containing protein 12 (166 aa).

At Met-1 the chain carries N-acetylmethionine. The tract at residues 1-56 is disordered; that stretch reads MEATTAGVGRLEEEALRRKERLKALREKTGRKDKEDGEPKTKHLREEEEEGEKHRE. Positions 8-28 form a coiled coil; sequence VGRLEEEALRRKERLKALREK. A compositionally biased stretch (basic and acidic residues) spans 10 to 56; sequence RLEEEALRRKERLKALREKTGRKDKEDGEPKTKHLREEEEEGEKHRE. Lys-53 is subject to N6-acetyllysine. Lys-94 participates in a covalent cross-link: Glycyl lysine isopeptide (Lys-Gly) (interchain with G-Cter in SUMO2). The stretch at 117 to 144 forms a coiled coil; that stretch reads KRDVAKKLEKLKKRTQRAIAELIRERLK. The disordered stretch occupies residues 147-166; that stretch reads EDSLASAVDAATEQKTCDSD. 2 positions are modified to phosphoserine: Ser-149 and Ser-165.

This Homo sapiens (Human) protein is Coiled-coil domain-containing protein 12 (CCDC12).